The following is a 776-amino-acid chain: Methionine--tRNA ligase (776 aa).

The 'HIGH' region signature appears at 10–20; sequence PYSNGPIHLGH. Residues C143, C146, C156, and C159 each coordinate Zn(2+). Positions 375–379 match the 'KMSKS' region motif; the sequence is KFSKS. K378 contacts ATP. Positions 676–776 constitute a tRNA-binding domain; the sequence is DFAKLDMRVG…KPISLGSKVR (101 aa).

The protein belongs to the class-I aminoacyl-tRNA synthetase family. MetG type 1 subfamily. Homodimer. Zn(2+) is required as a cofactor.

The protein localises to the cytoplasm. The enzyme catalyses tRNA(Met) + L-methionine + ATP = L-methionyl-tRNA(Met) + AMP + diphosphate. Its function is as follows. Is required not only for elongation of protein synthesis but also for the initiation of all mRNA translation through initiator tRNA(fMet) aminoacylation. In Nanoarchaeum equitans (strain Kin4-M), this protein is Methionine--tRNA ligase (metG).